The following is a 559-amino-acid chain: Acetylcholinesterase-1 (559 aa).

A signal peptide spans 1-21; that stretch reads MMLPRCFVTVLLMSSVLYIGG. An intrachain disulfide couples Cys92 to Cys114. 142-143 is a binding site for substrate; that stretch reads GG. The active-site Acyl-ester intermediate is the Ser223. Ser223 is modified (phosphoserine). Cys276 and Cys293 are joined by a disulfide. N-linked (GlcNAc...) asparagine glycosylation is found at Asn278 and Asn342. Catalysis depends on Glu354, which acts as the Charge relay system. N-linked (GlcNAc...) asparagine glycosylation occurs at Asn374. Cysteines 432 and 550 form a disulfide. His471 functions as the Charge relay system in the catalytic mechanism.

Belongs to the type-B carboxylesterase/lipase family. As to expression, expressed by the venom gland.

It localises to the secreted. It carries out the reaction acetylcholine + H2O = choline + acetate + H(+). Functionally, terminates signal transduction at the neuromuscular junction by rapid hydrolysis of the acetylcholine released into the synaptic cleft. The chain is Acetylcholinesterase-1 from Trittame loki (Brush-footed trapdoor spider).